The chain runs to 396 residues: CCA-adding enzyme (396 aa).

Gly-27 and Arg-30 together coordinate ATP. Positions 27 and 30 each coordinate CTP. Mg(2+) contacts are provided by Asp-40 and Asp-42. Arg-111, Asp-154, Arg-157, Arg-160, and Arg-163 together coordinate ATP. Positions 111, 154, 157, 160, and 163 each coordinate CTP.

The protein belongs to the tRNA nucleotidyltransferase/poly(A) polymerase family. Bacterial CCA-adding enzyme type 3 subfamily. Homodimer. Mg(2+) is required as a cofactor.

It catalyses the reaction a tRNA precursor + 2 CTP + ATP = a tRNA with a 3' CCA end + 3 diphosphate. It carries out the reaction a tRNA with a 3' CCA end + 2 CTP + ATP = a tRNA with a 3' CCACCA end + 3 diphosphate. Its function is as follows. Catalyzes the addition and repair of the essential 3'-terminal CCA sequence in tRNAs without using a nucleic acid template. Adds these three nucleotides in the order of C, C, and A to the tRNA nucleotide-73, using CTP and ATP as substrates and producing inorganic pyrophosphate. tRNA 3'-terminal CCA addition is required both for tRNA processing and repair. Also involved in tRNA surveillance by mediating tandem CCA addition to generate a CCACCA at the 3' terminus of unstable tRNAs. While stable tRNAs receive only 3'-terminal CCA, unstable tRNAs are marked with CCACCA and rapidly degraded. This is CCA-adding enzyme from Bacillus velezensis (strain DSM 23117 / BGSC 10A6 / LMG 26770 / FZB42) (Bacillus amyloliquefaciens subsp. plantarum).